A 194-amino-acid polypeptide reads, in one-letter code: uncharacterized protein (194 aa).

This sequence to A.aeolicus AQ_423.

This is an uncharacterized protein from Aquifex aeolicus (strain VF5).